The following is a 198-amino-acid chain: FMN-dependent NADH:quinone oxidoreductase (198 aa).

FMN-binding positions include Ser10, Ser16–Ser18, Met94–Phe97, and Thr138–Gly141.

It belongs to the azoreductase type 1 family. Homodimer. The cofactor is FMN.

It catalyses the reaction 2 a quinone + NADH + H(+) = 2 a 1,4-benzosemiquinone + NAD(+). The enzyme catalyses N,N-dimethyl-1,4-phenylenediamine + anthranilate + 2 NAD(+) = 2-(4-dimethylaminophenyl)diazenylbenzoate + 2 NADH + 2 H(+). Its function is as follows. Quinone reductase that provides resistance to thiol-specific stress caused by electrophilic quinones. Also exhibits azoreductase activity. Catalyzes the reductive cleavage of the azo bond in aromatic azo compounds to the corresponding amines. This Shewanella sp. (strain ANA-3) protein is FMN-dependent NADH:quinone oxidoreductase.